We begin with the raw amino-acid sequence, 475 residues long: Deoxyguanosinetriphosphate triphosphohydrolase-like protein (475 aa).

Positions R118–S272 constitute an HD domain.

This sequence belongs to the dGTPase family. Type 2 subfamily.

This chain is Deoxyguanosinetriphosphate triphosphohydrolase-like protein (dgt), found in Bifidobacterium longum (strain NCC 2705).